Consider the following 151-residue polypeptide: Transcriptional repressor NrdR (151 aa).

A zinc finger lies at 3–34 (CPFCSHPDTQVVETREAEDGGFIRRRRQCGGC). In terms of domain architecture, ATP-cone spans 49–139 (PAIVKKDGRR…VYRSFEDVDD (91 aa)).

Belongs to the NrdR family. Zn(2+) is required as a cofactor.

Negatively regulates transcription of bacterial ribonucleotide reductase nrd genes and operons by binding to NrdR-boxes. This chain is Transcriptional repressor NrdR, found in Delftia acidovorans (strain DSM 14801 / SPH-1).